A 1125-amino-acid polypeptide reads, in one-letter code: Speract receptor (1125 aa).

Positions 1 to 21 (MAHARHLFLFMVAFTITMVIA) are cleaved as a signal peptide. The Extracellular portion of the chain corresponds to 22–510 (RLDFNPTIIN…GELCTNWALY (489 aa)). N185 and N409 each carry an N-linked (GlcNAc...) asparagine glycan. The chain crosses the membrane as a helical span at residues 511 to 531 (LGASIPTFLIIFGGLIGFFIY). The Cytoplasmic segment spans residues 532 to 1125 (RKRAYEAALD…AANRVIPDDV (594 aa)). A Protein kinase domain is found at 571-839 (MSAISVISNA…PNIMAVRTML (269 aa)). The region spanning 914-1044 (SIFFSDIVGF…DTVNTASRME (131 aa)) is the Guanylate cyclase domain.

Belongs to the adenylyl cyclase class-4/guanylyl cyclase family.

It localises to the membrane. The enzyme catalyses GTP = 3',5'-cyclic GMP + diphosphate. In terms of biological role, implicated as a cell-surface receptor on spermatozoa for 'speract' a chemotactic peptide, and on various other cells as a receptor for atrial natriuretic peptide. The sequence is that of Speract receptor from Strongylocentrotus purpuratus (Purple sea urchin).